Here is a 276-residue protein sequence, read N- to C-terminus: Src-like-adapter (276 aa).

Residue G2 is the site of N-myristoyl glycine attachment. The region spanning 22–82 (LDSDFLAVLS…PGICVARVYH (61 aa)) is the SH3 domain. Positions 84 to 175 (WLFEGLGRDK…GLCCVLTTPC (92 aa)) constitute an SH2 domain. Residues 212–276 (EGTENPLGVD…FFSSPPYFED (65 aa)) form an SLA C-terminal region. Phosphoserine is present on S253. A Phosphotyrosine modification is found at Y273.

In terms of assembly, interacts with EPHA2, VAV1, LCP2 and PDGFRB. Homodimer. Homodimerization and interaction with phosphorylated CBL occurs via its C-terminal domain. Interacts with phosphorylated proteins ZAP70, CD3Z, SYK and LAT via its SH2 domain. In terms of tissue distribution, expressed in lung and fetal brain. Weakly expressed in heart, adult brain, placenta, liver, skeletal muscle, kidney and pancreas.

The protein localises to the cytoplasm. It localises to the endosome. Adapter protein, which negatively regulates T-cell receptor (TCR) signaling. Inhibits T-cell antigen-receptor induced activation of nuclear factor of activated T-cells. Involved in the negative regulation of positive selection and mitosis of T-cells. May act by linking signaling proteins such as ZAP70 with CBL, leading to a CBL dependent degradation of signaling proteins. The sequence is that of Src-like-adapter (SLA) from Homo sapiens (Human).